We begin with the raw amino-acid sequence, 198 residues long: Dual specificity protein phosphatase 13B (198 aa).

A Tyrosine-protein phosphatase domain is found at 45-193 (HINEVWPNLF…LQVLDNRLRR (149 aa)). Residue Cys138 is the Phosphocysteine intermediate of the active site.

It belongs to the protein-tyrosine phosphatase family. Non-receptor class dual specificity subfamily. Most abundantly expressed in the testis.

It carries out the reaction O-phospho-L-tyrosyl-[protein] + H2O = L-tyrosyl-[protein] + phosphate. It catalyses the reaction O-phospho-L-seryl-[protein] + H2O = L-seryl-[protein] + phosphate. The catalysed reaction is O-phospho-L-threonyl-[protein] + H2O = L-threonyl-[protein] + phosphate. Dual specificity phosphatase that dephosphorylates MAPK8/JNK and MAPK14/p38, but not MAPK1/ERK2, in vitro. Exhibits intrinsic phosphatase activity towards both phospho-seryl/threonyl and -tyrosyl residues, with similar specific activities in vitro. The protein is Dual specificity protein phosphatase 13B of Mus musculus (Mouse).